Here is a 659-residue protein sequence, read N- to C-terminus: Nicastrin (659 aa).

Positions 1 to 22 are cleaved as a signal peptide; it reads MKIKNYFIIVFIIIVLSTDVIS. At 23-627 the chain is on the extracellular side; sequence SQSSIEDKMY…LFQVGSYANE (605 aa). Residues N94, N172, N305, N389, N451, N475, N550, N553, and N600 are each glycosylated (N-linked (GlcNAc...) asparagine). The helical transmembrane segment at 628–648 threads the bilayer; sequence IWFLVSGLIELLLSVGIIFYI. Over 649–659 the chain is Cytoplasmic; the sequence is KKYLSKRYKLL.

Belongs to the nicastrin family. Homodimer. Component of the gamma-secretase complex, a complex composed of a presenilin homodimer, nicastrin, aph1 and pen2.

The protein resides in the membrane. Functionally, essential subunit of the gamma-secretase complex, an endoprotease complex that catalyzes the intramembrane cleavage of integral membrane proteins such as Notch receptors and APP (amyloid-beta precursor protein). It probably represents a stabilizing cofactor required for the assembly of the gamma-secretase complex. In Dictyostelium discoideum (Social amoeba), this protein is Nicastrin (ncstn).